The primary structure comprises 529 residues: Cytokinin dehydrogenase 4 (529 aa).

An N-terminal signal peptide occupies residues 1 to 27; it reads MRGAMKPSIVHCLKLLMLLALGGVTMH. Residues 63 to 244 enclose the FAD-binding PCMH-type domain; it reads CSLLPAAVLH…TRARIALEPA (182 aa). FAD is bound by residues A99, G101, and G103. H104 is modified (pros-8alpha-FAD histidine). FAD-binding residues include S105, Q109, D168, T173, S179, V183, and I234. N285, N419, and N425 each carry an N-linked (GlcNAc...) asparagine glycan. Positions 479 and 517 each coordinate FAD.

This sequence belongs to the oxygen-dependent FAD-linked oxidoreductase family. Monomer. Requires FAD as cofactor. In terms of tissue distribution, expressed in inflorescence meristems.

The protein localises to the secreted. It is found in the extracellular space. It carries out the reaction N(6)-dimethylallyladenine + A + H2O = 3-methyl-2-butenal + adenine + AH2. Its function is as follows. Catalyzes the oxidation of cytokinins, a family of N(6)-substituted adenine derivatives that are plant hormones, where the substituent is an isopentenyl group. The chain is Cytokinin dehydrogenase 4 (CKX4) from Oryza sativa subsp. japonica (Rice).